We begin with the raw amino-acid sequence, 314 residues long: A-kinase anchor protein 7 isoform gamma (314 aa).

Residues 1-46 form a disordered region; that stretch reads MPFAAVDIQDDCGSPDVPQANPKRSKEEEEDRGDKNDHVKKRKKAK. The segment covering 24–37 has biased composition (basic and acidic residues); sequence RSKEEEEDRGDKND. Residues T95 and 185–187 contribute to the AMP site; that span reads HLT. Residues T95 and 185-187 contribute to the CMP site; that span reads HLT. A PKA-RII-alpha subunit binding domain region spans residues 260–314; sequence AELVRLSKRLVENAVLKAVQQYLEETQNKKQPGEGNSTKAEEGDRNGDGSDNNRK. Residues 261 to 285 are RI-alpha-binding; it reads ELVRLSKRLVENAVLKAVQQYLEET. Positions 262 to 275 are RII-binding; that stretch reads LVRLSKRLVENAVL. The interval 281–314 is disordered; sequence YLEETQNKKQPGEGNSTKAEEGDRNGDGSDNNRK. Basic and acidic residues predominate over residues 298–314; sequence KAEEGDRNGDGSDNNRK.

As to quaternary structure, binds cAMP-dependent protein kinase (PKA). Interacts with PRKCA; only the cytoplasmic form is capable of interacting with PRKCA. Expressed in oocytes.

The protein resides in the nucleus. The protein localises to the cytoplasm. Its function is as follows. Probably targets cAMP-dependent protein kinase (PKA) to the cellular membrane or cytoskeletal structures. The membrane-associated form reduces epithelial sodium channel (ENaC) activity, whereas the free cytoplasmic form may negatively regulate ENaC channel feedback inhibition by intracellular sodium. The chain is A-kinase anchor protein 7 isoform gamma from Mus musculus (Mouse).